We begin with the raw amino-acid sequence, 238 residues long: Sugar fermentation stimulation protein homolog (238 aa).

It belongs to the SfsA family.

This chain is Sugar fermentation stimulation protein homolog, found in Brucella melitensis biotype 1 (strain ATCC 23456 / CCUG 17765 / NCTC 10094 / 16M).